A 133-amino-acid chain; its full sequence is Snaclec A9 (133 aa).

Cystine bridges form between cysteine 4–cysteine 15, cysteine 32–cysteine 131, and cysteine 106–cysteine 123. One can recognise a C-type lectin domain in the interval 11 to 132; sequence YEGHCYKVFN…CGQPYRFTCE (122 aa).

It belongs to the snaclec family. As to quaternary structure, heterodimer; disulfide-linked. As to expression, expressed by the venom gland.

Its subcellular location is the secreted. In terms of biological role, interferes with one step of hemostasis (modulation of platelet aggregation, or coagulation cascade, for example). The protein is Snaclec A9 of Macrovipera lebetinus (Levantine viper).